Here is a 136-residue protein sequence, read N- to C-terminus: NADH-ubiquinone oxidoreductase chain 3 (136 aa).

3 consecutive transmembrane segments (helical) span residues T5–F25, I55–Y75, and G85–F105.

The protein belongs to the complex I subunit 3 family.

It is found in the mitochondrion membrane. The enzyme catalyses a ubiquinone + NADH + 5 H(+)(in) = a ubiquinol + NAD(+) + 4 H(+)(out). Functionally, core subunit of the mitochondrial membrane respiratory chain NADH dehydrogenase (Complex I) that is believed to belong to the minimal assembly required for catalysis. Complex I functions in the transfer of electrons from NADH to the respiratory chain. The immediate electron acceptor for the enzyme is believed to be ubiquinone. The chain is NADH-ubiquinone oxidoreductase chain 3 (nd3) from Emericella nidulans (Aspergillus nidulans).